A 191-amino-acid chain; its full sequence is dCTP deaminase, dUMP-forming (191 aa).

Residues 101 to 106 (KSSLGR), Asp119, 127 to 129 (TLE), Gln148, Tyr162, and Gln174 contribute to the dCTP site. The Proton donor/acceptor role is filled by Glu129. A disordered region spans residues 163-191 (GSAKYGSRYQGQRGPTPSRSYQNFHRTPI). Polar residues predominate over residues 171 to 191 (YQGQRGPTPSRSYQNFHRTPI).

The protein belongs to the dCTP deaminase family. As to quaternary structure, homotrimer.

The catalysed reaction is dCTP + 2 H2O = dUMP + NH4(+) + diphosphate. Its pathway is pyrimidine metabolism; dUMP biosynthesis; dUMP from dCTP: step 1/1. Its function is as follows. Bifunctional enzyme that catalyzes both the deamination of dCTP to dUTP and the hydrolysis of dUTP to dUMP without releasing the toxic dUTP intermediate. This Nocardioides sp. (strain ATCC BAA-499 / JS614) protein is dCTP deaminase, dUMP-forming.